A 258-amino-acid polypeptide reads, in one-letter code: Pimeloyl-[acyl-carrier protein] methyl ester esterase (258 aa).

Positions 16–241 constitute an AB hydrolase-1 domain; that stretch reads LVLLHGWGLN…GSAHAPFVSH (226 aa). Residues Trp-22, 82 to 83, and 143 to 147 contribute to the substrate site; these read SM and FLALQ. The active-site Nucleophile is the Ser-82. Active-site residues include Asp-207 and His-235. His-235 lines the substrate pocket.

Belongs to the AB hydrolase superfamily. Carboxylesterase BioH family. Monomer.

Its subcellular location is the cytoplasm. It catalyses the reaction 6-carboxyhexanoyl-[ACP] methyl ester + H2O = 6-carboxyhexanoyl-[ACP] + methanol + H(+). It participates in cofactor biosynthesis; biotin biosynthesis. Functionally, the physiological role of BioH is to remove the methyl group introduced by BioC when the pimeloyl moiety is complete. It allows to synthesize pimeloyl-ACP via the fatty acid synthetic pathway through the hydrolysis of the ester bonds of pimeloyl-ACP esters. The protein is Pimeloyl-[acyl-carrier protein] methyl ester esterase of Yersinia enterocolitica serotype O:8 / biotype 1B (strain NCTC 13174 / 8081).